A 575-amino-acid polypeptide reads, in one-letter code: Suppressor of tumorigenicity 7 protein-like (575 aa).

2 helical membrane-spanning segments follow: residues 36–56 (GLAG…LYAL) and 80–100 (FYVA…IFEW). Residues 125-147 (GTESSISEPGSPSRNRENETSRQ) form a disordered region. Polar residues predominate over residues 126–137 (TESSISEPGSPS).

This sequence belongs to the ST7 family.

It is found in the membrane. In Homo sapiens (Human), this protein is Suppressor of tumorigenicity 7 protein-like (ST7L).